The following is a 1183-amino-acid chain: DNA-directed RNA polymerase subunit beta (1183 aa).

The protein belongs to the RNA polymerase beta chain family. As to quaternary structure, the RNAP catalytic core consists of 2 alpha, 1 beta, 1 beta' and 1 omega subunit. When a sigma factor is associated with the core the holoenzyme is formed, which can initiate transcription.

It carries out the reaction RNA(n) + a ribonucleoside 5'-triphosphate = RNA(n+1) + diphosphate. Its function is as follows. DNA-dependent RNA polymerase catalyzes the transcription of DNA into RNA using the four ribonucleoside triphosphates as substrates. The protein is DNA-directed RNA polymerase subunit beta of Staphylococcus aureus (strain JH9).